We begin with the raw amino-acid sequence, 544 residues long: Glucans biosynthesis protein G (544 aa).

The first 34 residues, 1 to 34, serve as a signal peptide directing secretion; it reads MVSLLRCQSSKPYSSLICSLALGVAFALSGTAYA.

This sequence belongs to the OpgD/OpgG family.

The protein resides in the periplasm. Its pathway is glycan metabolism; osmoregulated periplasmic glucan (OPG) biosynthesis. Involved in the biosynthesis of osmoregulated periplasmic glucans (OPGs). In Shewanella putrefaciens (strain CN-32 / ATCC BAA-453), this protein is Glucans biosynthesis protein G.